Here is a 366-residue protein sequence, read N- to C-terminus: A-type ATP synthase subunit C (366 aa).

This sequence belongs to the V-ATPase V0D/AC39 subunit family. Has multiple subunits with at least A(3), B(3), C, D, E, F, H, I and proteolipid K(x).

It localises to the cell membrane. Functionally, component of the A-type ATP synthase that produces ATP from ADP in the presence of a proton gradient across the membrane. The polypeptide is A-type ATP synthase subunit C (Thermococcus onnurineus (strain NA1)).